We begin with the raw amino-acid sequence, 363 residues long: MSGNTYGKLFTVTTAGESHGPALVAIVDGCPPGLELSLEDMQRDLDRRKPGTSRHTTQRQEDDVVEILSGVFEGKTTGCAIGLLIRNTDQKSKDYSAIKDLFRPAHADYTYHHKYGIRDYRGGGRSSARETAMRVAAGAIAKKYLATQGIQVRGYMSQLGPIEIPFKTWDSVEQNAFFSPDPDKVPALETYMDQLRRDQDSVGAKITVVAEGVMPGLGEPIFDRLDAELAHALMSINAVKGVEIGAGFASVSQRGTEHRDELTPEGFLSNNAGGILGGISSGQPIVAHLALKPTSSITTPGRSIDIDGNPVEVITKGRHDPCVGIRATPIAEAMMAIVLMDHLLRHRAQNAEVRVATPVLPQL.

NADP(+) is bound by residues R48 and R54. Residues 125-127 (RSS), 237-238 (NA), G277, 292-296 (KPTSS), and R318 contribute to the FMN site.

Belongs to the chorismate synthase family. Homotetramer. FMNH2 is required as a cofactor.

The catalysed reaction is 5-O-(1-carboxyvinyl)-3-phosphoshikimate = chorismate + phosphate. Its pathway is metabolic intermediate biosynthesis; chorismate biosynthesis; chorismate from D-erythrose 4-phosphate and phosphoenolpyruvate: step 7/7. In terms of biological role, catalyzes the anti-1,4-elimination of the C-3 phosphate and the C-6 proR hydrogen from 5-enolpyruvylshikimate-3-phosphate (EPSP) to yield chorismate, which is the branch point compound that serves as the starting substrate for the three terminal pathways of aromatic amino acid biosynthesis. This reaction introduces a second double bond into the aromatic ring system. The protein is Chorismate synthase of Ectopseudomonas mendocina (strain ymp) (Pseudomonas mendocina).